A 322-amino-acid chain; its full sequence is MSASIPDIKLSSGHLMPSIGFGCWKLANATAGEQVYQAIKAGYRLFDGAEDYGNEKEVGDGVKRAIDEGLVKREEIFLTSKLWNNYHDPKNVETALNKTLADLKVDYVDLFLIHFPIAFKFVPIEEKYPPGFYCGDGNNFVYEDVPILETWKALEKLVAAGKIKSIGVSNFPGALLLDLLRGATIKPAVLQVEHHPYLQQPKLIEFAQKAGVTITAYSSFGPQSFVEMNQGRALNTPTLFAHDTIKAIAAKYNKTPAEVLLRWAAQRGIAVIPKSNLPERLVQNRSFNTFDLTKEDFEEIAKLDIGLRFNDPWDWDNIPIFV.

Tyrosine 52 acts as the Proton donor in catalysis. Histidine 114 is a substrate binding site. NAD(+) contacts are provided by residues serine 169–asparagine 170, serine 218–glutamate 227, and lysine 274–asparagine 284.

It belongs to the aldo/keto reductase family. Homodimer.

It catalyses the reaction xylitol + NAD(+) = D-xylose + NADH + H(+). The catalysed reaction is xylitol + NADP(+) = D-xylose + NADPH + H(+). Its pathway is carbohydrate metabolism; D-xylose degradation. Functionally, reduces D-xylose into xylitol. Has a preference for NADPH, but can also utilize NADH as cosubstrate. The sequence is that of NAD(P)H-dependent D-xylose reductase (XYL1) from Candida tenuis (Yeast).